Here is a 457-residue protein sequence, read N- to C-terminus: Serine--tRNA ligase (457 aa).

252 to 254 (TAE) serves as a coordination point for L-serine. ATP-binding positions include 283–285 (RKE) and V299. E306 contacts L-serine. Residue 370-373 (EMVS) coordinates ATP. Position 406 (T406) interacts with L-serine.

Belongs to the class-II aminoacyl-tRNA synthetase family. Type-1 seryl-tRNA synthetase subfamily. In terms of assembly, homodimer. The tRNA molecule binds across the dimer.

The protein localises to the cytoplasm. The catalysed reaction is tRNA(Ser) + L-serine + ATP = L-seryl-tRNA(Ser) + AMP + diphosphate + H(+). The enzyme catalyses tRNA(Sec) + L-serine + ATP = L-seryl-tRNA(Sec) + AMP + diphosphate + H(+). It functions in the pathway aminoacyl-tRNA biosynthesis; selenocysteinyl-tRNA(Sec) biosynthesis; L-seryl-tRNA(Sec) from L-serine and tRNA(Sec): step 1/1. Its function is as follows. Catalyzes the attachment of serine to tRNA(Ser). Is also able to aminoacylate tRNA(Sec) with serine, to form the misacylated tRNA L-seryl-tRNA(Sec), which will be further converted into selenocysteinyl-tRNA(Sec). In Saccharolobus islandicus (strain Y.N.15.51 / Yellowstone #2) (Sulfolobus islandicus), this protein is Serine--tRNA ligase.